The following is a 142-amino-acid chain: MKTFVAKPHEVQRDWFVIDAKGKVLGRVASEVARRLRGKHKPEFTPHVDTGDYIVIINAAEIVVTGNKAQDKKYFRHTTYPGGIRETNFEKLQQRFPGRAIQKAVKGMLPKGPLGYAMIKKLKVYAGAEHPHTAQQPKPLDI.

Belongs to the universal ribosomal protein uL13 family. Part of the 50S ribosomal subunit.

Its function is as follows. This protein is one of the early assembly proteins of the 50S ribosomal subunit, although it is not seen to bind rRNA by itself. It is important during the early stages of 50S assembly. This Bordetella petrii (strain ATCC BAA-461 / DSM 12804 / CCUG 43448) protein is Large ribosomal subunit protein uL13.